We begin with the raw amino-acid sequence, 840 residues long: E3 ubiquitin-protein ligase RNF19A (840 aa).

Positions 40–61 (SDRDLQSSTSSVSLPSVKKAPK) are disordered. A compositionally biased stretch (low complexity) spans 45–56 (QSSTSSVSLPSV). Residues 128–351 (DFIECPLCLL…LSPSGCTFWG (224 aa)) form a TRIAD supradomain region. Zn(2+) is bound by residues Cys132, Cys135, Cys150, His152, Cys155, Cys158, Cys176, Cys179, Cys219, Cys224, Cys241, Cys246, Cys251, Cys254, His259, Cys264, Cys301, and Cys304. The RING-type 1 zinc-finger motif lies at 132-179 (CPLCLLRHSKDRFPDIMTCHHRSCVDCLRQYLRIEISESRVNISCPEC). The IBR-type zinc finger occupies 199–264 (EKYEEFMLRR…KQIWHPNQTC (66 aa)). The segment at 301-332 (CPRCAAYIIKMNDGSCNHMTCAVCGCEFCWLC) adopts an RING-type 2; atypical zinc-finger fold. The active site involves Cys316. Residues Cys321, Cys324, Cys329, Cys332, His340, and Cys347 each coordinate Zn(2+). Transmembrane regions (helical) follow at residues 368 to 388 (LVGA…AMII) and 424 to 444 (VIVS…IMLA). Disordered regions lie at residues 625–685 (FKFR…GNMK), 700–721 (QQST…PSVA), and 786–808 (CSDV…GGKP). At Ser631 the chain carries Phosphoserine. Positions 660–840 (ATKWSKEATG…DLKVAVQTEI (181 aa)) are interaction with CASR. Residues 671-683 (KKSKSGKLRKKGN) show a composition bias toward basic residues. Residues 700-717 (QQSTNSSEFEAPSLSDSM) show a composition bias toward polar residues.

It belongs to the RBR family. RNF19 subfamily. In terms of assembly, interacts with UBE2L3 and UBE2L6. Also interacts with transcription factor Sp1. Interacts with SNCAIP and CASR. Interacts with VCP.

The protein resides in the membrane. The protein localises to the cytoplasm. Its subcellular location is the cytoskeleton. It localises to the microtubule organizing center. It is found in the centrosome. The enzyme catalyses [E2 ubiquitin-conjugating enzyme]-S-ubiquitinyl-L-cysteine + [acceptor protein]-L-lysine = [E2 ubiquitin-conjugating enzyme]-L-cysteine + [acceptor protein]-N(6)-ubiquitinyl-L-lysine.. Its pathway is protein modification; protein ubiquitination. Functionally, E3 ubiquitin-protein ligase which accepts ubiquitin from E2 ubiquitin-conjugating enzymes UBE2L3 and UBE2L6 in the form of a thioester and then directly transfers the ubiquitin to targeted substrates, such as SNCAIP or CASR. In Mus musculus (Mouse), this protein is E3 ubiquitin-protein ligase RNF19A (Rnf19a).